The sequence spans 392 residues: tRNA (guanine(6)-N2)-methyltransferase (392 aa).

The THUMP domain occupies 73–183 (SAIPLLNHFS…DSELFVGVDT (111 aa)). Residues 199-203 (HPAHL), 230-232 (SGT), Glu-275, 303-304 (DA), and Asn-317 contribute to the S-adenosyl-L-methionine site.

Belongs to the methyltransferase superfamily.

It localises to the cytoplasm. It catalyses the reaction guanosine(6) in tRNA + S-adenosyl-L-methionine = N(2)-methylguanosine(6) in tRNA + S-adenosyl-L-homocysteine + H(+). In terms of biological role, S-adenosyl-L-methionine-dependent methyltransferase that catalyzes the methylation of the guanosine nucleotide at position 6 (m2G6) in tRNA. The sequence is that of tRNA (guanine(6)-N2)-methyltransferase from Archaeoglobus fulgidus (strain ATCC 49558 / DSM 4304 / JCM 9628 / NBRC 100126 / VC-16).